The primary structure comprises 152 residues: UPF0756 membrane protein JDM1_1594 (152 aa).

4 helical membrane-spanning segments follow: residues 25-45 (ATVVVLLIKLIPNTSKLLTTI), 52-72 (WGVTVITVAILIPIATGQIGF), 85-105 (WIAVACGVLVSVLSFHGVGLL), and 115-135 (LVFGTIMGVVLLKGIAAGPII).

This sequence belongs to the UPF0756 family.

The protein resides in the cell membrane. This is UPF0756 membrane protein JDM1_1594 from Lactiplantibacillus plantarum (strain JDM1) (Lactobacillus plantarum).